The primary structure comprises 1177 residues: Solute carrier family 9 member C1 (1177 aa).

The Extracellular portion of the chain corresponds to M1–E17. Residues V18 to E37 form a helical membrane-spanning segment. Over D38–P42 the chain is Cytoplasmic. Residues V43–T60 traverse the membrane as a helical segment. The Extracellular portion of the chain corresponds to S61–P76. A helical membrane pass occupies residues D77–F93. Residues D94–L103 are Cytoplasmic-facing. Residues F104 to V129 form a helical membrane-spanning segment. The interval F104–D191 is transport core domain. The Extracellular segment spans residues N130–K135. Residues P136–L161 traverse the membrane as a helical segment. Topologically, residues G162–S164 are cytoplasmic. The helical transmembrane segment at R165–M190 threads the bilayer. The Extracellular segment spans residues D191 to L204. The chain crosses the membrane as a helical span at residues A205–T236. Topologically, residues V237–D240 are cytoplasmic. The helical transmembrane segment at D241–V262 threads the bilayer. At G263–S265 the chain is on the extracellular side. A helical membrane pass occupies residues G266–S279. Topologically, residues T280–I286 are cytoplasmic. The chain crosses the membrane as a helical span at residues E287–Y319. The Extracellular segment spans residues L320–F324. Residues V325–R354 form a helical membrane-spanning segment. The transport core domain stretch occupies residues V325–L426. Topologically, residues V355–S360 are cytoplasmic. Residues W361–F391 form a helical membrane-spanning segment. The Extracellular portion of the chain corresponds to G392–K395. Residues E396 to L426 traverse the membrane as a helical segment. The Cytoplasmic portion of the chain corresponds to G427 to E612. The segment at Y598–F678 is ion transport-like. A helical transmembrane segment spans residues F613–I633. Residues S634–N637 are Extracellular-facing. Residues V638–A664 traverse the membrane as a helical segment. The Cytoplasmic portion of the chain corresponds to A665 to F671. Residues S672–D696 traverse the membrane as a helical segment. Over T697 to E704 the chain is Extracellular. Residues T705–L731 traverse the membrane as a helical segment. At Q732 to E1177 the chain is on the cytoplasmic side.

It belongs to the monovalent cation:proton antiporter 1 (CPA1) transporter (TC 2.A.36) family. In terms of assembly, interacts with soluble adenylyl cyclase (sAC). Sperm.

It is found in the cell projection. The protein localises to the cilium. The protein resides in the flagellum membrane. Functionally, sperm-specific solute carrier involved in intracellular pH regulation of spermatozoa. Required for sperm motility and fertility. Involved in sperm cell hyperactivation, a step needed for sperm motility which is essential late in the preparation of sperm for fertilization. Required for the expression and bicarbonate regulation of the soluble adenylyl cyclase (sAC). This chain is Solute carrier family 9 member C1 (SLC9C1), found in Homo sapiens (Human).